The sequence spans 258 residues: Imidazole glycerol phosphate synthase subunit HisF (258 aa).

Active-site residues include Asp11 and Asp130.

Belongs to the HisA/HisF family. As to quaternary structure, heterodimer of HisH and HisF.

The protein localises to the cytoplasm. It carries out the reaction 5-[(5-phospho-1-deoxy-D-ribulos-1-ylimino)methylamino]-1-(5-phospho-beta-D-ribosyl)imidazole-4-carboxamide + L-glutamine = D-erythro-1-(imidazol-4-yl)glycerol 3-phosphate + 5-amino-1-(5-phospho-beta-D-ribosyl)imidazole-4-carboxamide + L-glutamate + H(+). It participates in amino-acid biosynthesis; L-histidine biosynthesis; L-histidine from 5-phospho-alpha-D-ribose 1-diphosphate: step 5/9. Functionally, IGPS catalyzes the conversion of PRFAR and glutamine to IGP, AICAR and glutamate. The HisF subunit catalyzes the cyclization activity that produces IGP and AICAR from PRFAR using the ammonia provided by the HisH subunit. In Lachnoclostridium phytofermentans (strain ATCC 700394 / DSM 18823 / ISDg) (Clostridium phytofermentans), this protein is Imidazole glycerol phosphate synthase subunit HisF.